The following is a 148-amino-acid chain: Iron/alpha-ketoglutarate-dependent dioxygenase ausU (148 aa).

His45 and Asp47 together coordinate Fe cation.

This sequence belongs to the PhyH family. Homodimer. Requires Fe cation as cofactor.

Its pathway is secondary metabolite biosynthesis; terpenoid biosynthesis. In terms of biological role, iron/alpha-ketoglutarate-dependent dioxygenase; part of the gene cluster B that mediates the biosynthesis of austinol and dehydroaustinol, two fungal meroterpenoids. The first step of the pathway is the synthesis of 3,5-dimethylorsellinic acid by the polyketide synthase ausA. 3,5-dimethylorsellinic acid is then prenylated by the polyprenyl transferase ausN. Further epoxidation by the FAD-dependent monooxygenase ausM and cyclization by the probable terpene cyclase ausL lead to the formation of protoaustinoid A. Protoaustinoid A is then oxidized to spiro-lactone preaustinoid A3 by the combined action of the FAD-binding monooxygenases ausB and ausC, and the dioxygenase ausE. Acid-catalyzed keto-rearrangement and ring contraction of the tetraketide portion of preaustinoid A3 by ausJ lead to the formation of preaustinoid A4. The aldo-keto reductase ausK, with the help of ausH, is involved in the next step by transforming preaustinoid A4 into isoaustinone which is in turn hydroxylated by the P450 monooxygenase ausI to form austinolide. Finally, the cytochrome P450 monooxygenase ausG modifies austinolide to austinol. Austinol can be further modified to dehydroaustinol which forms a diffusible complex with diorcinol that initiates conidiation. Due to genetic rearrangements of the clusters and the subsequent loss of some enzymes, the end products of the Emericella nidulans austinoid biosynthesis clusters are austinol and dehydroaustinol, even if additional enzymes, such as the O-acetyltransferase ausQ and the cytochrome P450 monooxygenase ausR are still functional. The polypeptide is Iron/alpha-ketoglutarate-dependent dioxygenase ausU (Emericella nidulans (strain FGSC A4 / ATCC 38163 / CBS 112.46 / NRRL 194 / M139) (Aspergillus nidulans)).